A 146-amino-acid chain; its full sequence is MNEKQKRFADEYIMNGCNGKKAAISAGYSKKTAESLASRLLRNVNVSEYIKERLEQIQEERLMSITEALALSASIARGEPQEAYSKKYDHLNDEVEKEVTYTITPTFEERQRSIDHILKVHGAYIDKKEITQKNIEINIGEYDDES.

The protein belongs to the SPP1-like small terminase family. As to quaternary structure, homodecamer. Interacts with the terminase large subunit; the active complex is probably composed of a one monomer of the large subunit and two or more decamers of the small subunit.

Functionally, the terminase small subunit specifically recognizes the non-adjacent pacL and pacR packaging subsites and regulates the ATPase activity of the terminase large subunit. The terminase lies at a unique vertex of the procapsid and is composed of two subunits, a small terminase subunit involved in viral DNA recognition (packaging sequence), and a large terminase subunit possessing endonucleolytic and ATPase activities. Both terminase subunits heterooligomerize and are docked on the portal protein to form the packaging machine. The terminase large subunit exhibits endonuclease activity and cleaves the viral genome concatemer once the capsid is full (headful packaging). Once the capsid is packaged with the DNA, the terminase complex is substituted by neck proteins. This chain is Terminase small subunit, found in Staphylococcus phage 80alpha.